We begin with the raw amino-acid sequence, 613 residues long: Thioredoxin reductase 1, cytoplasmic (613 aa).

Positions 58–121 (AVLPASRPSK…LPTMNGSKDP (64 aa)) are disordered. Over residues 65 to 74 (PSKTLPSSSQ) the composition is skewed to polar residues. FAD contacts are provided by residues 136–137 (SG), 156–157 (DF), 172–173 (TC), and 177–181 (GCIPK). A disulfide bond links C173 and C178. K182 carries the post-translational modification N6-succinyllysine. A Phosphotyrosine modification is found at Y245. FAD-binding positions include 245–246 (YG) and T275. NADP(+) contacts are provided by residues R280, 312–318 (ASYVALE), 335–336 (RS), R340, 340–342 (RGF), 406–407 (GR), and K429. An FAD-binding site is contributed by Y314. FAD is bound by residues D448, 455–457 (ELT), and H586. E455 lines the NADP(+) pocket. H586 functions as the Proton acceptor in the catalytic mechanism. A cross-link (cysteinyl-selenocysteine (Cys-Sec)) is located at residues 611–612 (CU). U612 is a non-standard amino acid (selenocysteine).

Belongs to the class-I pyridine nucleotide-disulfide oxidoreductase family. Homodimer. It depends on FAD as a cofactor. Post-translationally, ISGylated.

Its subcellular location is the cytoplasm. It catalyses the reaction [thioredoxin]-dithiol + NADP(+) = [thioredoxin]-disulfide + NADPH + H(+). The enzyme catalyses H2O2 + NADPH + H(+) = NADP(+) + 2 H2O. Reduces disulfideprotein thioredoxin (Trx) to its dithiol-containing form. Homodimeric flavoprotein involved in the regulation of cellular redox reactions, growth and differentiation. Contains a selenocysteine residue at the C-terminal active site that is essential for catalysis. Also has reductase activity on hydrogen peroxide (H2O2). This chain is Thioredoxin reductase 1, cytoplasmic, found in Mus musculus (Mouse).